A 341-amino-acid polypeptide reads, in one-letter code: CD2 antigen cytoplasmic tail-binding protein 2 (341 aa).

The disordered stretch occupies residues Met-1–Leu-66. Lys-26 is covalently cross-linked (Glycyl lysine isopeptide (Lys-Gly) (interchain with G-Cter in SUMO2)). N6-acetyllysine is present on Lys-44. Phosphoserine occurs at positions 46, 49, and 118. The span at Ser-49–Gly-58 shows a compositional bias: acidic residues. Disordered regions lie at residues Arg-131–Ser-151 and Leu-178–Leu-199. Phosphoserine is present on residues Ser-194 and Ser-195. Residues Asp-280–Asp-338 form the GYF domain.

As to quaternary structure, component of the U5 snRNP complex composed of the U5 snRNA and at least PRPF6, PRPF8, SNRNP200, EFTUD2, SNRNP40, DDX23, TXNL4A and CD2BP2. Interacts directly with TXNL4A and PRPF6. Interacts (via GYF domain) with CD2 (via Pro-rich sequence in the cytoplasmic domain). Interacts with PQBP1.

The protein resides in the cytoplasm. It is found in the nucleus. In terms of biological role, involved in pre-mRNA splicing as component of the U5 snRNP complex that is involved in spliceosome assembly. This is CD2 antigen cytoplasmic tail-binding protein 2 (CD2BP2) from Homo sapiens (Human).